We begin with the raw amino-acid sequence, 918 residues long: Interleukin-6 receptor subunit beta (918 aa).

A signal peptide spans 1 to 22; sequence MLTLQTWLVQALFIFLTTESTG. The Extracellular segment spans residues 23–619; sequence ELLDPCGYIS…TPKFAQGEIE (597 aa). Positions 26-120 constitute an Ig-like C2-type domain; that stretch reads DPCGYISPES…LEQNVYGITI (95 aa). 2 disulfide bridges follow: Cys-28–Cys-54 and Cys-48–Cys-103. 3 N-linked (GlcNAc...) asparagine glycosylation sites follow: Asn-43, Asn-83, and Asn-131. 5 consecutive Fibronectin type-III domains span residues 125-216, 224-324, 329-424, 426-517, and 518-613; these read PPEK…NFDP, PPHN…TYED, APSF…FQAT, PVMD…LKQA, and PPSK…TPKF. An intrachain disulfide couples Cys-134 to Cys-144. N-linked (GlcNAc...) asparagine glycosylation occurs at Asn-157. A disulfide bond links Cys-172 and Cys-182. The N-linked (GlcNAc...) asparagine glycan is linked to Asn-227. Residues 310 to 314 carry the WSXWS motif motif; that stretch reads WSDWS. Residues Asn-379 and Asn-383 are each glycosylated (N-linked (GlcNAc...) asparagine). Asn-390 carries an N-linked (GlcNAc...) (complex) asparagine glycan. The cysteines at positions 458 and 466 are disulfide-linked. Asn-553 and Asn-564 each carry an N-linked (GlcNAc...) asparagine glycan. A helical transmembrane segment spans residues 620–641; the sequence is AIVVPVCLAFLLTTLLGVLFCF. Over 642 to 918 the chain is Cytoplasmic; the sequence is NKRDLIKKHI…TVRQGGYMPQ (277 aa). Positions 651–659 match the Box 1 motif motif; that stretch reads IWPNVPDPS. Disordered regions lie at residues 660-681 and 722-758; these read KSHI…SKDQ and EGHS…STVQ. 2 positions are modified to phosphoserine: Ser-661 and Ser-667. Low complexity predominate over residues 731 to 755; that stretch reads SSCMSSSRPSISSSDENESSQNTSS. Phosphoserine occurs at positions 782, 789, 829, and 839.

This sequence belongs to the type I cytokine receptor family. Type 2 subfamily. In terms of assembly, component of a hexamer of two molecules each of IL6, IL6R and IL6ST; associates with the complex IL6:IL6R but does not interact with IL6. Forms heterodimers composed of LIFR and IL6ST (type I OSM receptor) which are activated by LIF and OSM. Also forms heterodimers composed of OSMR and IL6ST (type II receptor) which are activated by OSM but not by LIF. Component of a receptor complex composed of IL6ST/GP130, IL27RA/WSX1 and CNTFR which interacts with the neuroprotective peptide humanin. Interacts with HCK. Interacts with INPP5D/SHIP1. Interacts with SRC and YES. Interacts with ARMH4; this interaction prevents IL6ST protein homodimerization and bridges ARMH4 with IL6R and STAT3 and therefore inhibits phosphorylation of STAT3 at 'Tyr-705'. As to quaternary structure, (Microbial infection) The homodimer binds two molecules of herpes virus 8/HHV-8 protein vIL-6. Phosphorylation of Ser-782 down-regulates cell surface expression. In terms of processing, heavily N-glycosylated. Glycosylation is required for protein stability and localization in plasma membrane but not for ligand binding. In terms of tissue distribution, found in all the tissues and cell lines examined. Expression not restricted to IL6 responsive cells. Expressed in blood serum (at protein level).

The protein resides in the cell membrane. Its subcellular location is the secreted. Functionally, signal-transducing molecule. The receptor systems for IL6, LIF, OSM, CNTF, IL11, CTF1 and BSF3 can utilize IL6ST for initiating signal transmission. Binding of IL6 to IL6R induces IL6ST homodimerization and formation of a high-affinity receptor complex, which activates the intracellular JAK-MAPK and JAK-STAT3 signaling pathways. That causes phosphorylation of IL6ST tyrosine residues which in turn activates STAT3. In parallel, the IL6 signaling pathway induces the expression of two cytokine receptor signaling inhibitors, SOCS1 and SOCS3, which inhibit JAK and terminate the activity of the IL6 signaling pathway as a negative feedback loop. Also activates the yes-associated protein 1 (YAP) and NOTCH pathways to control inflammation-induced epithelial regeneration, independently of STAT3. Acts as a receptor for the neuroprotective peptide humanin as part of a complex with IL27RA/WSX1 and CNTFR. Mediates signals which regulate immune response, hematopoiesis, pain control and bone metabolism. Has a role in embryonic development. Essential for survival of motor and sensory neurons and for differentiation of astrocytes. Required for expression of TRPA1 in nociceptive neurons. Required for the maintenance of PTH1R expression in the osteoblast lineage and for the stimulation of PTH-induced osteoblast differentiation. Required for normal trabecular bone mass and cortical bone composition. Its function is as follows. Binds to the soluble IL6:sIL6R complex (hyper-IL6), thereby blocking IL6 trans-signaling. Inhibits sIL6R-dependent acute phase response. Also blocks IL11 cluster signaling through IL11R. The protein is Interleukin-6 receptor subunit beta of Homo sapiens (Human).